A 112-amino-acid polypeptide reads, in one-letter code: Large ribosomal subunit protein uL22 (112 aa).

Belongs to the universal ribosomal protein uL22 family. In terms of assembly, part of the 50S ribosomal subunit.

Functionally, this protein binds specifically to 23S rRNA; its binding is stimulated by other ribosomal proteins, e.g. L4, L17, and L20. It is important during the early stages of 50S assembly. It makes multiple contacts with different domains of the 23S rRNA in the assembled 50S subunit and ribosome. Its function is as follows. The globular domain of the protein is located near the polypeptide exit tunnel on the outside of the subunit, while an extended beta-hairpin is found that lines the wall of the exit tunnel in the center of the 70S ribosome. This chain is Large ribosomal subunit protein uL22, found in Moorella thermoacetica (strain ATCC 39073 / JCM 9320).